The sequence spans 125 residues: Small ribosomal subunit protein uS12c (125 aa).

The segment at 104–125 (ASGVKDRKQGRSKYGGKRPKGD) is disordered. Over residues 113-125 (GRSKYGGKRPKGD) the composition is skewed to basic residues.

It belongs to the universal ribosomal protein uS12 family. Part of the 30S ribosomal subunit.

Its subcellular location is the plastid. It localises to the chloroplast. Functionally, with S4 and S5 plays an important role in translational accuracy. Located at the interface of the 30S and 50S subunits. The sequence is that of Small ribosomal subunit protein uS12c (rps12) from Emiliania huxleyi (Coccolithophore).